Reading from the N-terminus, the 316-residue chain is Olfactory receptor 10H4 (316 aa).

At 1–26 (MPSQNYSIISEFNLFGFSAFPQHLLP) the chain is on the extracellular side. N-linked (GlcNAc...) asparagine glycosylation occurs at asparagine 5. Residues 27 to 47 (ILFLLYLLMFLFTLLGNLLIM) form a helical membrane-spanning segment. Residues 48 to 55 (ATIWIEHR) are Cytoplasmic-facing. Residues 56-76 (LHTPMYLFLCTLSVSEILFTV) traverse the membrane as a helical segment. The Extracellular portion of the chain corresponds to 77–100 (AITPRMLADLLSTHHSITFVACAN). Cysteine 98 and cysteine 190 are disulfide-bonded. A helical membrane pass occupies residues 101–121 (QMFFSFMFGFTHSFLLLVMGY). The Cytoplasmic portion of the chain corresponds to 122-140 (DRYVAICHPLRYNVLMSPR). The helical transmembrane segment at 141–161 (DCAHLVACTWAGGSVMGMMVT) threads the bilayer. Residues 162–198 (TIVFHLTFCGSNVIHHFFCHVLSLLKLACENKTSSVI) lie on the Extracellular side of the membrane. The chain crosses the membrane as a helical span at residues 199 to 219 (MGVMLVCVTALIGCLFLIILS). At 220–239 (YVFIVAAILRIPSAEGRHKT) the chain is on the cytoplasmic side. A helical transmembrane segment spans residues 240-260 (FSTCVSHLTVVVTHYSFASFI). Topologically, residues 261–273 (YLKPKGLHSMYSD) are extracellular. The chain crosses the membrane as a helical span at residues 274–294 (ALMATTYTVFTPFLSPIIFSL). The Cytoplasmic segment spans residues 295-316 (RNKELKNAINKNFYRKFCPPSS).

It belongs to the G-protein coupled receptor 1 family.

It localises to the cell membrane. In terms of biological role, odorant receptor. The sequence is that of Olfactory receptor 10H4 (OR10H4) from Homo sapiens (Human).